Consider the following 344-residue polypeptide: GDSL esterase/lipase At1g73610 (344 aa).

Positions 1–24 (MNCLMFFKMLLAFSFISLFYVGNA) are cleaved as a signal peptide. Asn-30 carries an N-linked (GlcNAc...) asparagine glycan. Ser-42 serves as the catalytic Nucleophile. Active-site residues include Asp-319 and His-322.

This sequence belongs to the 'GDSL' lipolytic enzyme family.

Its subcellular location is the secreted. This is GDSL esterase/lipase At1g73610 from Arabidopsis thaliana (Mouse-ear cress).